We begin with the raw amino-acid sequence, 1193 residues long: Protein diaphanous homolog 3 (1193 aa).

Positions 1–10 (MERHQPRLHH) are enriched in basic residues. The interval 1–57 (MERHQPRLHHPAQGSAAGTPYPSSASLRGCRESKMPRRKGPQHPPPPSGPEEPGEKR) is disordered. A Phosphoserine modification is found at Ser26. The Nuclear localization signal signature appears at 36–60 (PRRKGPQHPPPPSGPEEPGEKRPKF). At Thr68 the chain carries Phosphothreonine. Residues Ser77 and Ser175 each carry the phosphoserine modification. Residues 114–476 (PKPLSENELL…QIVLHRDGMD (363 aa)) enclose the GBD/FH3 domain. A coiled-coil region spans residues 497 to 554 (IDQAKLEEFEEKASELYKKFEKEFTDHQETQAELQKKEAKINELQAELQAFKSQFGAL). The tract at residues 558–622 (CNIPLPPSKE…PPPLGFLGGQ (65 aa)) is disordered. In terms of domain architecture, FH1 spans 561-631 (PLPPSKEGGT…QNSPPLPILP (71 aa)). Over residues 575–600 (LPPPPPLPSGGGVPPPPPPPPPPPLP) the composition is skewed to pro residues. A Phosphoserine modification is found at Ser624. The FH2 domain maps to 636–1034 (PKKEFKPEIS…EKRVRIAKEL (399 aa)). Positions 1013 to 1056 (KENIKKREAEEKEKRVRIAKELAERERLERQQKKKRLLEMKTEG) form a coiled coil. A DAD domain is found at 1057 to 1087 (DETGVMDNLLEALQSGAAFRDRRKRTPMPKD). Residues Ser1093 and Ser1179 each carry the phosphoserine modification. The short motif at 1184-1193 (EALLARLRAL) is the Nuclear export signal element.

The protein belongs to the formin homology family. Diaphanous subfamily. In terms of processing, ubiquitinated.

The protein resides in the cytoplasm. The protein localises to the nucleus. Functionally, actin nucleation and elongation factor required for the assembly of F-actin structures, such as actin cables and stress fibers. Required for cytokinesis, stress fiber formation and transcriptional activation of the serum response factor. Binds to GTP-bound form of Rho and to profilin: acts in a Rho-dependent manner to recruit profilin to the membrane, where it promotes actin polymerization. DFR proteins couple Rho and Src tyrosine kinase during signaling and the regulation of actin dynamics. Also acts as an actin nucleation and elongation factor in the nucleus by promoting nuclear actin polymerization inside the nucleus to drive serum-dependent SRF-MRTFA activity. The chain is Protein diaphanous homolog 3 (DIAPH3) from Homo sapiens (Human).